We begin with the raw amino-acid sequence, 240 residues long: Ribosome maturation protein SDO1 homolog (240 aa).

The protein belongs to the SDO1/SBDS family.

In Methanocaldococcus jannaschii (strain ATCC 43067 / DSM 2661 / JAL-1 / JCM 10045 / NBRC 100440) (Methanococcus jannaschii), this protein is Ribosome maturation protein SDO1 homolog.